The chain runs to 186 residues: Ribosome-recycling factor (186 aa).

The protein belongs to the RRF family.

The protein localises to the cytoplasm. Functionally, responsible for the release of ribosomes from messenger RNA at the termination of protein biosynthesis. May increase the efficiency of translation by recycling ribosomes from one round of translation to another. This Bordetella avium (strain 197N) protein is Ribosome-recycling factor.